The sequence spans 122 residues: Large ribosomal subunit protein uL14 (122 aa).

It belongs to the universal ribosomal protein uL14 family. As to quaternary structure, part of the 50S ribosomal subunit. Forms a cluster with proteins L3 and L19. In the 70S ribosome, L14 and L19 interact and together make contacts with the 16S rRNA in bridges B5 and B8.

Binds to 23S rRNA. Forms part of two intersubunit bridges in the 70S ribosome. The chain is Large ribosomal subunit protein uL14 from Brucella anthropi (strain ATCC 49188 / DSM 6882 / CCUG 24695 / JCM 21032 / LMG 3331 / NBRC 15819 / NCTC 12168 / Alc 37) (Ochrobactrum anthropi).